The primary structure comprises 241 residues: 1-(5-phosphoribosyl)-5-[(5-phosphoribosylamino)methylideneamino] imidazole-4-carboxamide isomerase (241 aa).

The Proton acceptor role is filled by Asp-11. Asp-130 serves as the catalytic Proton donor.

It belongs to the HisA/HisF family.

The protein resides in the cytoplasm. The enzyme catalyses 1-(5-phospho-beta-D-ribosyl)-5-[(5-phospho-beta-D-ribosylamino)methylideneamino]imidazole-4-carboxamide = 5-[(5-phospho-1-deoxy-D-ribulos-1-ylimino)methylamino]-1-(5-phospho-beta-D-ribosyl)imidazole-4-carboxamide. It participates in amino-acid biosynthesis; L-histidine biosynthesis; L-histidine from 5-phospho-alpha-D-ribose 1-diphosphate: step 4/9. The polypeptide is 1-(5-phosphoribosyl)-5-[(5-phosphoribosylamino)methylideneamino] imidazole-4-carboxamide isomerase (Acidothermus cellulolyticus (strain ATCC 43068 / DSM 8971 / 11B)).